A 116-amino-acid polypeptide reads, in one-letter code: Large ribosomal subunit protein bL19 (116 aa).

Belongs to the bacterial ribosomal protein bL19 family.

Its function is as follows. This protein is located at the 30S-50S ribosomal subunit interface and may play a role in the structure and function of the aminoacyl-tRNA binding site. This chain is Large ribosomal subunit protein bL19, found in Pseudomonas entomophila (strain L48).